Consider the following 429-residue polypeptide: Ribosomal RNA small subunit methyltransferase B (429 aa).

S-adenosyl-L-methionine is bound by residues Cys-254 to Lys-260, Asp-277, Asp-303, and Asp-322. Catalysis depends on Cys-375, which acts as the Nucleophile. Residues Ala-397–Asp-419 form a disordered region. Residues Glu-400–Leu-412 show a composition bias toward polar residues.

It belongs to the class I-like SAM-binding methyltransferase superfamily. RsmB/NOP family.

Its subcellular location is the cytoplasm. The catalysed reaction is cytidine(967) in 16S rRNA + S-adenosyl-L-methionine = 5-methylcytidine(967) in 16S rRNA + S-adenosyl-L-homocysteine + H(+). Functionally, specifically methylates the cytosine at position 967 (m5C967) of 16S rRNA. In Salmonella heidelberg (strain SL476), this protein is Ribosomal RNA small subunit methyltransferase B.